The sequence spans 1098 residues: Tudor domain-containing protein 7 (1098 aa).

2 consecutive HTH OST-type domains span residues glutamate 3–alanine 76 and lysine 233–lysine 302. Serine 319 is modified (phosphoserine). One can recognise an HTH OST-type 3 domain in the interval methionine 337–leucine 406. 2 consecutive Tudor domains span residues alanine 513–leucine 570 and leucine 703–glutamate 760. Serine 859 is modified (phosphoserine). Residues asparagine 861 to asparagine 1098 are interaction with CDK17. The interval threonine 893–asparagine 1098 is interaction with CABLES1.

This sequence belongs to the TDRD7 family. Found in a mRNP complex, at least composed of TDRD1, TDRD6, TDRD7 and DDX4. Found in a complex containing CABLES1, CDK16 and CDK17. Interacts with CABLES1, CDK17 and PIWIL1.

The protein localises to the cytoplasm. Component of specific cytoplasmic RNA granules involved in post-transcriptional regulation of specific genes: probably acts by binding to specific mRNAs and regulating their translation. Required for lens transparency during lens development, by regulating translation of genes such as CRYBB3 and HSPB1 in the developing lens. Also required during spermatogenesis. The polypeptide is Tudor domain-containing protein 7 (TDRD7) (Pongo abelii (Sumatran orangutan)).